The chain runs to 215 residues: UPF0502 protein PputGB1_3531 (215 aa).

Belongs to the UPF0502 family.

In Pseudomonas putida (strain GB-1), this protein is UPF0502 protein PputGB1_3531.